A 449-amino-acid chain; its full sequence is XK-related protein 2 (449 aa).

10 consecutive transmembrane segments (helical) span residues 35–55, 68–88, 98–118, 174–194, 204–224, 241–261, 269–289, 306–326, 357–377, and 382–402; these read FSIL…LYMV, TYTF…LIFV, LSLF…EAMI, IQAF…SLIS, LMAF…MLAI, LCIT…LVLF, AVPF…VKFW, VGTL…NFSC, LVEN…VLLN, and LIAV…LLFF.

It belongs to the XK family.

It is found in the membrane. This Mus musculus (Mouse) protein is XK-related protein 2 (Xkrx).